Consider the following 314-residue polypeptide: Putative S-adenosyl-L-methionine-dependent methyltransferase MAP_4191c (314 aa).

S-adenosyl-L-methionine-binding positions include Asp-138 and Asp-167 to Leu-168.

Belongs to the UPF0677 family.

Functionally, exhibits S-adenosyl-L-methionine-dependent methyltransferase activity. The polypeptide is Putative S-adenosyl-L-methionine-dependent methyltransferase MAP_4191c (Mycolicibacterium paratuberculosis (strain ATCC BAA-968 / K-10) (Mycobacterium paratuberculosis)).